The sequence spans 85 residues: Putative membrane protein insertion efficiency factor (85 aa).

Belongs to the UPF0161 family.

It localises to the cell inner membrane. Functionally, could be involved in insertion of integral membrane proteins into the membrane. The protein is Putative membrane protein insertion efficiency factor of Sodalis glossinidius (strain morsitans).